The following is a 211-amino-acid chain: Thiamine-phosphate synthase (211 aa).

4-amino-2-methyl-5-(diphosphooxymethyl)pyrimidine is bound by residues 43 to 47 and N75; that span reads QLRDK. Mg(2+) is bound by residues D76 and D95. S114 is a binding site for 4-amino-2-methyl-5-(diphosphooxymethyl)pyrimidine. Residue 140-142 participates in 2-[(2R,5Z)-2-carboxy-4-methylthiazol-5(2H)-ylidene]ethyl phosphate binding; the sequence is TAS. Residue K143 participates in 4-amino-2-methyl-5-(diphosphooxymethyl)pyrimidine binding. Residues G170 and 190–191 each bind 2-[(2R,5Z)-2-carboxy-4-methylthiazol-5(2H)-ylidene]ethyl phosphate; that span reads IS.

The protein belongs to the thiamine-phosphate synthase family. It depends on Mg(2+) as a cofactor.

It catalyses the reaction 2-[(2R,5Z)-2-carboxy-4-methylthiazol-5(2H)-ylidene]ethyl phosphate + 4-amino-2-methyl-5-(diphosphooxymethyl)pyrimidine + 2 H(+) = thiamine phosphate + CO2 + diphosphate. The enzyme catalyses 2-(2-carboxy-4-methylthiazol-5-yl)ethyl phosphate + 4-amino-2-methyl-5-(diphosphooxymethyl)pyrimidine + 2 H(+) = thiamine phosphate + CO2 + diphosphate. The catalysed reaction is 4-methyl-5-(2-phosphooxyethyl)-thiazole + 4-amino-2-methyl-5-(diphosphooxymethyl)pyrimidine + H(+) = thiamine phosphate + diphosphate. The protein operates within cofactor biosynthesis; thiamine diphosphate biosynthesis; thiamine phosphate from 4-amino-2-methyl-5-diphosphomethylpyrimidine and 4-methyl-5-(2-phosphoethyl)-thiazole: step 1/1. Its function is as follows. Condenses 4-methyl-5-(beta-hydroxyethyl)thiazole monophosphate (THZ-P) and 2-methyl-4-amino-5-hydroxymethyl pyrimidine pyrophosphate (HMP-PP) to form thiamine monophosphate (TMP). In Coprothermobacter proteolyticus (strain ATCC 35245 / DSM 5265 / OCM 4 / BT), this protein is Thiamine-phosphate synthase.